We begin with the raw amino-acid sequence, 948 residues long: Protocadherin alpha-2 (948 aa).

An N-terminal signal peptide occupies residues 1–22 (MASSIRRGLGAWTRLLSLLLLA). Residues 23-697 (AWEVGSGQLR…GSEATLVDVN (675 aa)) are Extracellular-facing. Cadherin domains are found at residues 30–133 (QLRY…PPVF), 157–242 (ASDA…EPTF), 243–350 (AQSV…TPEV), 351–455 (SITS…APAF), 456–565 (AQPE…APAL), and 588–678 (GHVV…APKA). Residues Asn257, Asn265, Asn362, and Asn548 are each glycosylated (N-linked (GlcNAc...) asparagine). A helical membrane pass occupies residues 698 to 718 (VYLIIAICAVSSLLVLTVLLY). Residues 719 to 948 (TALRCSVPAT…GNSTTDNSDQ (230 aa)) are Cytoplasmic-facing. The PXXP 1 repeat unit spans residues 734 to 737 (PGKP). A 5 X 4 AA repeats of P-X-X-P region spans residues 734–892 (PGKPTLVCSS…PDKFIIPGSP (159 aa)). Disordered regions lie at residues 755 to 801 (RQRV…RQPN), 829 to 854 (GPGG…EVSP), and 868 to 948 (KYGP…NSDQ). A compositionally biased stretch (basic and acidic residues) spans 783–795 (AEEKQLSESEYVG). 4 PXXP repeats span residues 797–800 (PRQP), 830–833 (PGGP), 871–874 (PGNP), and 889–892 (PGSP). Positions 907–921 (DKSDFITFGKKEETK) are enriched in basic and acidic residues.

Its subcellular location is the cell membrane. Functionally, potential calcium-dependent cell-adhesion protein. May be involved in the establishment and maintenance of specific neuronal connections in the brain. This is Protocadherin alpha-2 (PCDHA2) from Pan troglodytes (Chimpanzee).